The following is a 218-amino-acid chain: Recombination protein RecR (218 aa).

The C4-type zinc finger occupies 56-71 (CRICCNISRDEVCRIC). The Toprim domain maps to 79 to 195 (GLICVVEEPK…VVSRLASGMP (117 aa)).

The protein belongs to the RecR family.

Its function is as follows. May play a role in DNA repair. It seems to be involved in an RecBC-independent recombinational process of DNA repair. It may act with RecF and RecO. The chain is Recombination protein RecR from Corynebacterium efficiens (strain DSM 44549 / YS-314 / AJ 12310 / JCM 11189 / NBRC 100395).